The following is a 264-amino-acid chain: Sororin (264 aa).

The disordered stretch occupies residues 1–45 (MAERRTRSGGAAQRSGPRTSLTKPSKSSKRKSGSDLPNSFSEIWP). Residues S20, S32, S34, S78, and S82 each carry the phosphoserine modification. A KEN box motif is present at residues 87–89 (KEN). At T97 the chain carries Phosphothreonine. S106 carries the phosphoserine modification. A phosphothreonine mark is found at T110, T114, and T159. An FGF motif motif is present at residues 166-168 (FGF). S222 is modified (phosphoserine). The tract at residues 242–264 (LDKWAVAMNAEFEAAEQFELLIE) is C-terminal Sororin domain.

It belongs to the sororin family. In terms of assembly, interacts with the APC/C complex. Interacts with the chromatin-bound cohesin complex; the interaction is indirect, occurs after DNA replication and requires acetylation of the cohesin component SMC3. Interacts (via the FGF motif) with PDS5A and PDS5B; the interaction is direct and prevents the interaction of PDS5A with WAPL. Phosphorylated. Phosphorylation, as cells enter mitosis, disrupts the interaction with PDS5A and relieves the inhibition of WAPL by CDCA5. Post-translationally, ubiquitinated by the APC/C complex in G1, leading to its degradation.

It is found in the nucleus. The protein resides in the chromosome. Its subcellular location is the cytoplasm. Regulator of sister chromatid cohesion in mitosis stabilizing cohesin complex association with chromatin. May antagonize the action of WAPL which stimulates cohesin dissociation from chromatin. Cohesion ensures that chromosome partitioning is accurate in both meiotic and mitotic cells and plays an important role in DNA repair. Required for efficient DNA double-stranded break repair. The sequence is that of Sororin (Cdca5) from Mus musculus (Mouse).